Here is a 388-residue protein sequence, read N- to C-terminus: bZIP transcription factor ABI5 homolog (388 aa).

The tract at residues 1-36 (MASEMSKNVKVTDDQEVTSQERDQSGGTKVGGEEEI) is disordered. The residue at position 44 (Ser-44) is a Phosphoserine. The bZIP domain maps to 302 to 365 (VERRQRRMIK…KQMLVEKMME (64 aa)). Positions 304–323 (RRQRRMIKNRESAARSRARK) are basic motif. Residues 330 to 344 (LEAELNYLKQENARL) form a leucine-zipper region. Positions 368 to 388 (KEKMNANRGGSQLRRSGSCMW) are disordered.

It belongs to the bZIP family. ABI5 subfamily. As to quaternary structure, forms homodimers. Interacts with VP1. Interacts with GF14D. Interacts with PP2C51. Interacts with SAPK2. Phosphorylated at Ser-44 by SAPK6. Expressed in roots, leaves and panicles. Expressed in seeds.

It localises to the nucleus. Functionally, transcription factor that possesses transactivation activity in yeast. Involved in abscisic acid (ABA) signaling pathway. Binds to the G-box motif 5'-CACGTG-3' of TRAB1 gene promoter. Involved in the regulation of pollen maturation. May act as negative regulator of salt stress response. Together with PYL5, PP2C30 and SAPK2, is part of an ABA signaling unit that modulates seed germination and early seedling growth. The sequence is that of bZIP transcription factor ABI5 homolog from Oryza sativa subsp. japonica (Rice).